The primary structure comprises 316 residues: Acetaldehyde dehydrogenase 1 (316 aa).

NAD(+) is bound at residue 12-15 (SGNI). Residue cysteine 132 is the Acyl-thioester intermediate of the active site. Residues 163-171 (SAGPGTRAN) and asparagine 291 contribute to the NAD(+) site.

It belongs to the acetaldehyde dehydrogenase family.

The enzyme catalyses acetaldehyde + NAD(+) + CoA = acetyl-CoA + NADH + H(+). The chain is Acetaldehyde dehydrogenase 1 from Pseudomonas putida (strain ATCC 700007 / DSM 6899 / JCM 31910 / BCRC 17059 / LMG 24140 / F1).